The sequence spans 444 residues: Tubulin beta chain (444 aa).

Positions 11, 69, 138, 142, 143, 144, 204, and 226 each coordinate GTP. E69 contributes to the Mg(2+) binding site.

This sequence belongs to the tubulin family. In terms of assembly, dimer of alpha and beta chains. A typical microtubule is a hollow water-filled tube with an outer diameter of 25 nm and an inner diameter of 15 nM. Alpha-beta heterodimers associate head-to-tail to form protofilaments running lengthwise along the microtubule wall with the beta-tubulin subunit facing the microtubule plus end conferring a structural polarity. Microtubules usually have 13 protofilaments but different protofilament numbers can be found in some organisms and specialized cells. Mg(2+) serves as cofactor.

The protein localises to the cytoplasm. The protein resides in the cytoskeleton. Its function is as follows. Tubulin is the major constituent of microtubules, a cylinder consisting of laterally associated linear protofilaments composed of alpha- and beta-tubulin heterodimers. Microtubules grow by the addition of GTP-tubulin dimers to the microtubule end, where a stabilizing cap forms. Below the cap, tubulin dimers are in GDP-bound state, owing to GTPase activity of alpha-tubulin. The sequence is that of Tubulin beta chain from Euplotoides octocarinatus (Freshwater ciliate).